The sequence spans 484 residues: tRNA sulfurtransferase (484 aa).

In terms of domain architecture, THUMP spans 61-166; that stretch reads PHLIELLQCI…DKLLFIQARH (106 aa). Residues 183–184, Lys-265, Gly-287, and Gln-296 each bind ATP; that span reads LI. A disulfide bond links Cys-344 and Cys-456. The 80-residue stretch at 404-483 folds into the Rhodanese domain; that stretch reads LGENDVILDI…FNNVQVFVKA (80 aa). Cys-456 serves as the catalytic Cysteine persulfide intermediate.

This sequence belongs to the ThiI family.

It is found in the cytoplasm. The catalysed reaction is [ThiI sulfur-carrier protein]-S-sulfanyl-L-cysteine + a uridine in tRNA + 2 reduced [2Fe-2S]-[ferredoxin] + ATP + H(+) = [ThiI sulfur-carrier protein]-L-cysteine + a 4-thiouridine in tRNA + 2 oxidized [2Fe-2S]-[ferredoxin] + AMP + diphosphate. The enzyme catalyses [ThiS sulfur-carrier protein]-C-terminal Gly-Gly-AMP + S-sulfanyl-L-cysteinyl-[cysteine desulfurase] + AH2 = [ThiS sulfur-carrier protein]-C-terminal-Gly-aminoethanethioate + L-cysteinyl-[cysteine desulfurase] + A + AMP + 2 H(+). It participates in cofactor biosynthesis; thiamine diphosphate biosynthesis. Its function is as follows. Catalyzes the ATP-dependent transfer of a sulfur to tRNA to produce 4-thiouridine in position 8 of tRNAs, which functions as a near-UV photosensor. Also catalyzes the transfer of sulfur to the sulfur carrier protein ThiS, forming ThiS-thiocarboxylate. This is a step in the synthesis of thiazole, in the thiamine biosynthesis pathway. The sulfur is donated as persulfide by IscS. The sequence is that of tRNA sulfurtransferase from Actinobacillus succinogenes (strain ATCC 55618 / DSM 22257 / CCUG 43843 / 130Z).